Consider the following 380-residue polypeptide: Lipid-A-disaccharide synthase (380 aa).

It belongs to the LpxB family.

The catalysed reaction is a lipid X + a UDP-2-N,3-O-bis[(3R)-3-hydroxyacyl]-alpha-D-glucosamine = a lipid A disaccharide + UDP + H(+). Its pathway is bacterial outer membrane biogenesis; LPS lipid A biosynthesis. In terms of biological role, condensation of UDP-2,3-diacylglucosamine and 2,3-diacylglucosamine-1-phosphate to form lipid A disaccharide, a precursor of lipid A, a phosphorylated glycolipid that anchors the lipopolysaccharide to the outer membrane of the cell. The protein is Lipid-A-disaccharide synthase of Francisella philomiragia subsp. philomiragia (strain ATCC 25017 / CCUG 19701 / FSC 153 / O#319-036).